The primary structure comprises 404 residues: Alkane 1-monooxygenase 1 (404 aa).

4 consecutive transmembrane segments (helical) span residues 25–45 (HLWI…YLVS), 47–67 (TGWS…VPLI), 94–114 (VLTY…AWWV), and 119–139 (IGVF…GLAL). Fe cation is bound by residues histidine 143 and histidine 147. Residues 151-171 (TFDRWMAKLVLAVVGYGHFFI) form a helical membrane-spanning segment. Fe cation-binding residues include histidine 173, histidine 177, and histidine 178. A helical membrane pass occupies residues 241–261 (VVLYAALLAFFGPLMLIFLPI). Fe cation is bound by residues histidine 317, histidine 320, and histidine 321.

This sequence belongs to the fatty acid desaturase type 1 family. AlkB subfamily. It depends on Fe(3+) as a cofactor.

The protein resides in the cell inner membrane. The enzyme catalyses octane + 2 reduced [rubredoxin] + O2 + 2 H(+) = 2 oxidized [rubredoxin] + octan-1-ol + H2O. It functions in the pathway hydrocarbon metabolism; alkane degradation. Catalyzes the hydroxylation of n-alkanes and fatty acids in the presence of a NADH-rubredoxin reductase and rubredoxin. It preferably hydroxylases C5-C12 hydrocarbons. The protein is Alkane 1-monooxygenase 1 (alkB1) of Alcanivorax borkumensis (strain ATCC 700651 / DSM 11573 / NCIMB 13689 / SK2).